The chain runs to 664 residues: NADH-ubiquinone oxidoreductase chain 5 (664 aa).

17 helical membrane passes run 2–22, 28–48, 77–97, 120–140, 168–188, 210–230, 250–270, 285–305, 321–341, 342–362, 376–396, 424–444, 462–482, 521–541, 590–610, 614–634, and 639–659; these read LLLTLIFLPFLGSVAAGLFGF, GSVFITTLTTFLSCIFSLIII, FLFDSLTMIMLVVVTSISTLV, LFTFFMIILVTGDNFMQMFVG, AMLVNRISDLILLLGVLTIFY, FIFFNYILSIIDVACILIFIG, GPTPVSALIHAATMVTAGVYL, LKIITIIGASTAFFASTVGLV, LGYMFFACGLSNYPLAIFHLS, NHAYFKALLFLCSGAVIHAMG, ILPFTYIMFLIGSLSLMGFPF, LGTIGAFFTAFYSTRLLFFAF, PLEMGIPLGLLAFGSIFIGYI, LPVILSFCGLFGAFYLYFFKF, IDKGLIEMCGPYGLTTIFSFL, IILLQTGYIYHYSLLMLISTI, and IIFFSIIYYFNIITILLFLFI.

This sequence belongs to the complex I subunit 5 family.

It localises to the mitochondrion inner membrane. It carries out the reaction a ubiquinone + NADH + 5 H(+)(in) = a ubiquinol + NAD(+) + 4 H(+)(out). Core subunit of the mitochondrial membrane respiratory chain NADH dehydrogenase (Complex I) that is believed to belong to the minimal assembly required for catalysis. Complex I functions in the transfer of electrons from NADH to the respiratory chain. The immediate electron acceptor for the enzyme is believed to be ubiquinone. This is NADH-ubiquinone oxidoreductase chain 5 (ND5) from Phytophthora infestans (Potato late blight agent).